We begin with the raw amino-acid sequence, 190 residues long: Translation initiation factor IF-3 (190 aa).

Belongs to the IF-3 family. In terms of assembly, monomer.

Its subcellular location is the cytoplasm. In terms of biological role, IF-3 binds to the 30S ribosomal subunit and shifts the equilibrium between 70S ribosomes and their 50S and 30S subunits in favor of the free subunits, thus enhancing the availability of 30S subunits on which protein synthesis initiation begins. This chain is Translation initiation factor IF-3, found in Prochlorococcus marinus (strain MIT 9301).